Here is a 115-residue protein sequence, read N- to C-terminus: MIPAKDMAKVMIVMLAICFLTKSDGKSVKKRSVSEIQLMHNLGKHLNSMERVEWLRKKLQDVHNFIALGAPLAPRDAGSQRPRKKEDNILVESHEKSLGEADKADVDVLTKAKSQ.

The first 25 residues, 1–25, serve as a signal peptide directing secretion; the sequence is MIPAKDMAKVMIVMLAICFLTKSDG. Positions 26-31 are excised as a propeptide; it reads KSVKKR. Positions 51 to 69 are important for receptor binding; the sequence is RVEWLRKKLQDVHNFIALG. Residues 72-96 form a disordered region; it reads LAPRDAGSQRPRKKEDNILVESHEK. Residues 84–96 show a composition bias toward basic and acidic residues; it reads KKEDNILVESHEK.

This sequence belongs to the parathyroid hormone family. Interacts with PTH1R (via N-terminal extracellular domain).

The protein localises to the secreted. In terms of biological role, parathyroid hormone elevates calcium level by dissolving the salts in bone and preventing their renal excretion. Acts by binding to its receptor, PTH1R, activating G protein-coupled receptor signaling. Stimulates [1-14C]-2-deoxy-D-glucose (2DG) transport and glycogen synthesis in osteoblastic cells. In Macaca fascicularis (Crab-eating macaque), this protein is Parathyroid hormone (PTH).